Consider the following 185-residue polypeptide: Ribosome-recycling factor (185 aa).

The protein belongs to the RRF family.

Its subcellular location is the cytoplasm. Functionally, responsible for the release of ribosomes from messenger RNA at the termination of protein biosynthesis. May increase the efficiency of translation by recycling ribosomes from one round of translation to another. This Azoarcus sp. (strain BH72) protein is Ribosome-recycling factor.